The primary structure comprises 87 residues: Virulence protein PagD (87 aa).

The first 20 residues, 1–20 (MKHHAFMLWSLLIFSFHVLA), serve as a signal peptide directing secretion. The segment at 46-87 (QPPTNTDKKQARQISSPSCPTTKPMMSAPVNDARKGNTFSRT) is disordered. Residues 57 to 66 (RQISSPSCPT) show a composition bias toward polar residues.

Functionally, putative function in virulence. Could be involved in promoting S.typhimurium survival within macrophages. This is Virulence protein PagD (pagD) from Salmonella typhimurium (strain LT2 / SGSC1412 / ATCC 700720).